Consider the following 384-residue polypeptide: S-adenosylmethionine synthase (384 aa).

Residue His15 participates in ATP binding. Asp17 contributes to the Mg(2+) binding site. Glu43 is a binding site for K(+). Glu56 and Gln99 together coordinate L-methionine. The flexible loop stretch occupies residues 99-109 (QSPDINQGVDR). Residues 164–166 (DAK), 230–231 (RF), Asp239, 245–246 (RK), Ala262, and Lys266 contribute to the ATP site. Asp239 lines the L-methionine pocket. Lys270 lines the L-methionine pocket.

Belongs to the AdoMet synthase family. Homotetramer; dimer of dimers. Mg(2+) serves as cofactor. Requires K(+) as cofactor.

Its subcellular location is the cytoplasm. The enzyme catalyses L-methionine + ATP + H2O = S-adenosyl-L-methionine + phosphate + diphosphate. It functions in the pathway amino-acid biosynthesis; S-adenosyl-L-methionine biosynthesis; S-adenosyl-L-methionine from L-methionine: step 1/1. Functionally, catalyzes the formation of S-adenosylmethionine (AdoMet) from methionine and ATP. The overall synthetic reaction is composed of two sequential steps, AdoMet formation and the subsequent tripolyphosphate hydrolysis which occurs prior to release of AdoMet from the enzyme. This chain is S-adenosylmethionine synthase, found in Escherichia coli (strain K12 / DH10B).